The sequence spans 250 residues: MWRLLSPTALLLLVSAGTRAADLSKAMVVLEPEWNRVLVSDGVILKCEGAYPPGDNSAQWWHNGSVIPHRAPSYSIEAARSEDSGEYKCQTGLSEASDPVQLEVHTGWLLLQAPRWVFQEGDTIQLRCHSWKNKTVQKVQYFQDGRGKMFFHKNSDFYIPKATSKHSGSYFCRGLIGNKNESSEAVNITVQGPPVPSTSTFLPHWYQIAFFLVTALLFVVDTGLHVAVQRDLQSSVKEWKDGKVTWSHGP.

An N-terminal signal peptide occupies residues 1 to 20; sequence MWRLLSPTALLLLVSAGTRA. The Extracellular portion of the chain corresponds to 21–207; sequence ADLSKAMVVL…TSTFLPHWYQ (187 aa). Ig-like C2-type domains follow at residues 32–105 and 120–189; these read PEWN…LEVH and EGDT…VNIT. 2 disulfides stabilise this stretch: Cys47-Cys89 and Cys128-Cys172. Asn63, Asn133, Asn180, and Asn187 each carry an N-linked (GlcNAc...) asparagine glycan. The helical transmembrane segment at 208–228 threads the bilayer; that stretch reads IAFFLVTALLFVVDTGLHVAV. Residues 229 to 250 are Cytoplasmic-facing; the sequence is QRDLQSSVKEWKDGKVTWSHGP.

As to quaternary structure, forms a heterooligomeric complex with ITAM-containing signaling subunits FCER1G. Interacts (via transmembrane domain) with signaling subunits; this interaction is a prerequisite for receptor complex expression on the cell surface and intracellular signal transduction. Binds the Fc region of antigen-complexed IgG.

It is found in the cell membrane. Its function is as follows. Receptor for the invariable Fc fragment of immunoglobulin gamma (IgG). Optimally activated upon binding of clustered antigen-IgG complexes displayed on cell surfaces, triggers lysis of antibody-coated cells, a process known as antibody-dependent cellular cytotoxicity (ADCC). Does not bind free monomeric IgG, thus avoiding inappropriate effector cell activation in the absence of antigenic trigger. Mediates IgG effector functions on natural killer (NK) cells. Binds antigen-IgG complexes generated upon infection and triggers NK cell-dependent cytokine production and degranulation to limit viral load and propagation. Fc-binding subunit that associates with FCER1G adapter to form functional signaling complexes. Following the engagement of antigen-IgG complexes, triggers phosphorylation of immunoreceptor tyrosine-based activation motif (ITAM)-containing adapter with subsequent activation of phosphatidylinositol 3-kinase signaling and sustained elevation of intracellular calcium that ultimately drive NK cell activation. Mediates enhanced ADCC in response to afucosylated IgGs. This Felis catus (Cat) protein is Low affinity immunoglobulin gamma Fc region receptor III-A.